Reading from the N-terminus, the 616-residue chain is Chaperone protein HscA (616 aa).

The protein belongs to the heat shock protein 70 family.

Its function is as follows. Chaperone involved in the maturation of iron-sulfur cluster-containing proteins. Has a low intrinsic ATPase activity which is markedly stimulated by HscB. Involved in the maturation of IscU. The protein is Chaperone protein HscA of Escherichia coli O139:H28 (strain E24377A / ETEC).